The chain runs to 162 residues: NADPH-dependent 7-cyano-7-deazaguanine reductase (162 aa).

The active-site Thioimide intermediate is Cys53. Catalysis depends on Asp60, which acts as the Proton donor. Residues 75–77 (VES) and 94–95 (HE) each bind substrate.

Belongs to the GTP cyclohydrolase I family. QueF type 1 subfamily.

Its subcellular location is the cytoplasm. It carries out the reaction 7-aminomethyl-7-carbaguanine + 2 NADP(+) = 7-cyano-7-deazaguanine + 2 NADPH + 3 H(+). It participates in tRNA modification; tRNA-queuosine biosynthesis. Functionally, catalyzes the NADPH-dependent reduction of 7-cyano-7-deazaguanine (preQ0) to 7-aminomethyl-7-deazaguanine (preQ1). This is NADPH-dependent 7-cyano-7-deazaguanine reductase from Exiguobacterium sp. (strain ATCC BAA-1283 / AT1b).